The primary structure comprises 338 residues: Glycerol-3-phosphate dehydrogenase [NAD(P)+] (338 aa).

NADPH contacts are provided by serine 13, tryptophan 14, and lysine 108. 3 residues coordinate sn-glycerol 3-phosphate: lysine 108, glycine 139, and serine 141. Alanine 143 lines the NADPH pocket. The sn-glycerol 3-phosphate site is built by lysine 194, aspartate 247, serine 257, arginine 258, and asparagine 259. The active-site Proton acceptor is lysine 194. Arginine 258 lines the NADPH pocket. Positions 282 and 284 each coordinate NADPH.

It belongs to the NAD-dependent glycerol-3-phosphate dehydrogenase family.

It localises to the cytoplasm. It carries out the reaction sn-glycerol 3-phosphate + NAD(+) = dihydroxyacetone phosphate + NADH + H(+). The enzyme catalyses sn-glycerol 3-phosphate + NADP(+) = dihydroxyacetone phosphate + NADPH + H(+). The protein operates within membrane lipid metabolism; glycerophospholipid metabolism. In terms of biological role, catalyzes the reduction of the glycolytic intermediate dihydroxyacetone phosphate (DHAP) to sn-glycerol 3-phosphate (G3P), the key precursor for phospholipid synthesis. The polypeptide is Glycerol-3-phosphate dehydrogenase [NAD(P)+] (Streptococcus agalactiae serotype III (strain NEM316)).